Reading from the N-terminus, the 498-residue chain is Swainsonine transporter swnT (498 aa).

Residues 1 to 10 are compositionally biased toward basic and acidic residues; the sequence is MSLRNDEQTE. A disordered region spans residues 1–21; that stretch reads MSLRNDEQTEKGAVVGKVDSQ. 5 helical membrane passes run 42–64, 79–99, 126–146, 167–187, and 193–213; these read LSAI…VLGT, LAMA…ISAI, AMIS…AVPV, FVVF…EYFL, and ALLL…FATA. Asparagine 227 and asparagine 242 each carry an N-linked (GlcNAc...) asparagine glycan. 6 helical membrane passes run 272–292, 316–336, 370–390, 398–418, 436–456, and 469–489; these read LIWT…AVLV, AAAI…VWSI, PIWS…LYLA, LIAT…ILVL, GFMA…FYCF, and YVSA…FLYA.

The protein belongs to the amino acid-polyamine-organocation (APC) superfamily. Amino acid/choline transporter (ACT) (TC 2.A.3.4) family.

The protein resides in the membrane. Transmembrane transporter; part of the gene cluster that mediates the biosynthesis of swainsonine, a cytotoxic fungal alkaloid and a potential cancer therapy drug. Does not mediate the secretion of SW and the exact role of swnT in SW biosynthesis remains to be determined. This is Swainsonine transporter swnT from Arthroderma benhamiae (strain ATCC MYA-4681 / CBS 112371) (Trichophyton mentagrophytes).